We begin with the raw amino-acid sequence, 334 residues long: NADH dehydrogenase (ubiquinone) complex I, assembly factor 6 homolog (334 aa).

A mitochondrion-targeting transit peptide spans Met1 to Arg11.

The protein belongs to the NDUFAF6 family. In terms of assembly, associates with mitochondrial complex I assembly intermediates during its biogenesis. Forms a complex including sicily, ND-42 and Hsp83; the complex is necessary to chaperone ND-42 in the cytoplasm before mitochondrial import; the interaction between sicily and ND-42 is direct and occurs preferably between the unprocessed forms in the cytoplasm; the interaction with Hsp83 is direct. Interacts with ND-30; interaction is stronger between the unprocessed forms in the cytoplasm. In terms of tissue distribution, expressed in the ventral nerve cord, larval brain, motor neuron axons, imaginal disks, and muscles (at protein level).

The protein localises to the mitochondrion inner membrane. It is found in the cytoplasm. The protein resides in the cytosol. Its function is as follows. Involved in the assembly of mitochondrial NADH:ubiquinone oxidoreductase complex (Complex I) at early stages. Interacts with cytosolic Hsp90 to chaperone the Complex I subunit ND-42 in the cytoplasm. This Drosophila melanogaster (Fruit fly) protein is NADH dehydrogenase (ubiquinone) complex I, assembly factor 6 homolog.